The primary structure comprises 220 residues: Protein-methionine-sulfoxide reductase heme-binding subunit MsrQ (220 aa).

6 helical membrane passes run 20 to 40 (LWLLYTAGFVPAVWTFYLGAT), 52 to 72 (EHLLGLWALRFLILTLLVTPI), 86 to 106 (ALGLLAFYYALMHFTTYMVLD), 122 to 142 (PFITIGMISLALLVPLALTSN), 153 to 173 (WSSLHKLVYIAIAGSAVHFLM), and 175 to 195 (VKSWPAEPVIYAAIVAALLLW).

The protein belongs to the MsrQ family. As to quaternary structure, heterodimer of a catalytic subunit (MsrP) and a heme-binding subunit (MsrQ). FMN serves as cofactor. Requires heme b as cofactor.

It localises to the cell inner membrane. Functionally, part of the MsrPQ system that repairs oxidized periplasmic proteins containing methionine sulfoxide residues (Met-O), using respiratory chain electrons. Thus protects these proteins from oxidative-stress damage caused by reactive species of oxygen and chlorine generated by the host defense mechanisms. MsrPQ is essential for the maintenance of envelope integrity under bleach stress, rescuing a wide series of structurally unrelated periplasmic proteins from methionine oxidation. MsrQ provides electrons for reduction to the reductase catalytic subunit MsrP, using the quinone pool of the respiratory chain. This chain is Protein-methionine-sulfoxide reductase heme-binding subunit MsrQ, found in Brucella abortus (strain S19).